The following is a 388-amino-acid chain: MGKKAVHFGGGNIGRGFVGEFLHESGYEVVFVDVMDNVIDALNKHSSYTVTEISEEGEQQKVITNYRAINSKHNLDDVIKEISTADVVTCAVGPNILKFIAPPIAKGIDTRTLSKPLAVIACENAIGATDTLHGFIKENTDEARLPSLYSRAQFANSAIDRIVPTQDLGSGLNVKIEKFYEWVVEKTPFGDVGHPDIKDIHWVDNLEPYIERKLFTVNTGHATAAYYGYSAGKKTIHDALRDDRIRKEVNAALAETSRLIVEKHGISPEEQARYVSSIITRISNPHLEDIVQRVGRAPLRKLSRKERFIGPASQLAERGHTVTALMDAVEQALKFQNVPDDEESFELFKILKENSAADATTKLTGLEKEHPLYSRVLEKVDKVQKETK.

5–16 (AVHFGGGNIGRG) provides a ligand contact to NAD(+). Lysine 213 is an active-site residue.

The protein belongs to the mannitol dehydrogenase family. In terms of assembly, monomer.

The enzyme catalyses D-mannitol 1-phosphate + NAD(+) = beta-D-fructose 6-phosphate + NADH + H(+). Catalyzes the NAD(H)-dependent interconversion of D-fructose 6-phosphate and D-mannitol 1-phosphate in the mannitol metabolic pathway. The polypeptide is Mannitol-1-phosphate 5-dehydrogenase (Ajellomyces capsulatus (strain NAm1 / WU24) (Darling's disease fungus)).